The primary structure comprises 95 residues: Acylphosphatase (95 aa).

The 86-residue stretch at 10 to 95 (CIHVTVSGKV…VEDYSDFRVR (86 aa)) folds into the Acylphosphatase-like domain. Active-site residues include Arg-25 and Asn-43.

The protein belongs to the acylphosphatase family.

It catalyses the reaction an acyl phosphate + H2O = a carboxylate + phosphate + H(+). This Coxiella burnetii (strain RSA 493 / Nine Mile phase I) protein is Acylphosphatase (acyP).